The chain runs to 586 residues: Probable lysosomal cobalamin transporter (586 aa).

The next 9 helical transmembrane spans lie at Ile10 to Phe30, Val47 to Val67, Ile96 to Ala116, Ser147 to Gly167, Ala191 to Thr211, Leu315 to Thr335, Ile378 to Val398, Ile420 to Met440, and Val509 to Leu529. N-linked (GlcNAc...) asparagine glycosylation is present at Asn540.

The protein belongs to the LIMR family. LMBRD1 subfamily.

The protein localises to the lysosome membrane. Its function is as follows. Probable lysosomal cobalamin transporter. Required to export cobalamin from lysosomes allowing its conversion to cofactors. This chain is Probable lysosomal cobalamin transporter, found in Pyricularia oryzae (strain 70-15 / ATCC MYA-4617 / FGSC 8958) (Rice blast fungus).